Consider the following 328-residue polypeptide: 4-hydroxythreonine-4-phosphate dehydrogenase (328 aa).

Substrate is bound by residues His134 and Thr135. 3 residues coordinate a divalent metal cation: His164, His209, and His265. Substrate is bound by residues Lys273, Asn282, and Arg291.

The protein belongs to the PdxA family. In terms of assembly, homodimer. Zn(2+) is required as a cofactor. It depends on Mg(2+) as a cofactor. The cofactor is Co(2+).

The protein resides in the cytoplasm. It catalyses the reaction 4-(phosphooxy)-L-threonine + NAD(+) = 3-amino-2-oxopropyl phosphate + CO2 + NADH. The protein operates within cofactor biosynthesis; pyridoxine 5'-phosphate biosynthesis; pyridoxine 5'-phosphate from D-erythrose 4-phosphate: step 4/5. Catalyzes the NAD(P)-dependent oxidation of 4-(phosphooxy)-L-threonine (HTP) into 2-amino-3-oxo-4-(phosphooxy)butyric acid which spontaneously decarboxylates to form 3-amino-2-oxopropyl phosphate (AHAP). This chain is 4-hydroxythreonine-4-phosphate dehydrogenase, found in Vibrio vulnificus (strain YJ016).